The chain runs to 243 residues: Transcription factor TFIIS homolog (243 aa).

One can recognise a TFIIS central domain in the interval 77–201 (MRDIIQMMFF…SQQKVAEKTS (125 aa)). Residues 202–242 (QLYKCPNCKQRMCTYREVQTRALDEPSTIFCTCKKCGHEFI) form a TFIIS-type zinc finger. Residues Cys-206, Cys-209, Cys-234, and Cys-237 each coordinate Zn(2+).

It belongs to the TFS-II family.

Its function is as follows. Putative initiation factor. Necessary for efficient transcription elongation past template-encoded arresting sites. This is Transcription factor TFIIS homolog from Ornithodoros (relapsing fever ticks).